The sequence spans 929 residues: MPPSPPSSAAADQWNIDYVNEDHLKAFAQALSYNDVQPLDGDSSPLSPRSFSLPPESPQLSTASVKAPPPTWKYGPDNGTLRSGRDTEERVEKLTATSDFAPIHQRVSRKRQRATSQGLTYNVIRWPLLFFIFFIIYLEFSAYVITRQIVNIFEWLVAWRGYKAKLRKELRKAKTYDEWVNTAKKLDKHLGFDDWKDVEEDSYFDWALVRRVRRTLTRLRAANDTRGLMDALAVCVRANFAGTESVKMYSETFIGTKKAVEAHIKEVAACLDYVRTATDVSLEEKRAFFRAVNKHYGSSALCLSGGASFGYYHFGVIKAFLEADLLPRVITGTSAGGLCAALLCTRTDSELKELLVPELADKITACSDPFTVWFKRFRQTGARFDTIDWARRSMWFTRGSLTFKEAYTKTGRALNISVVPSDRHSPTILLNHLTAPNCLIWSAILASAAVPGILNPVVLMAKDRSGNIKPHNLGGSRFKDGSLREDIPLGSLHTQFNCNFSIVSQTNPHIHLFFFAPRGSVGRPVAHRKGKGWRGGFILSALESYIKLDLSKHFKVIRDLDLMPQILQSDWSGVFLQRFSGDLTLTPRSTIGDWFHILSDPDRPQMKRMLRVGERVAWPALGMVRNRMTVERAILRGRSEVRTALSHDRTSNDPATSLPETNPELTGALDHVPIESDVDAGFVSRSRRARNKTGSKGGDTPEEQLNLAGVFQLDESSKGVRRRKQKKSGMPLVAEPLGELPEVSPTHSPIATESPQRNYTSNFGDSFRHVRAPSLPALSSPFRSIRSNTSSSSNNVQSPSSSQRFRSQLSITRWFGGVSESSSDEEDEDLGGLQSGEATASSGEEGIPTFQLDSAVESHSDRSEDEMLHSGANVKEEYQSEESEGKIPIPGGERVTQEKIDSSMASGERLRPAGGSKGSAKTPPVQDGA.

A disordered region spans residues 37 to 85; it reads QPLDGDSSPLSPRSFSLPPESPQLSTASVKAPPPTWKYGPDNGTLRSGR. Over residues 43-54 the composition is skewed to low complexity; sequence SSPLSPRSFSLP. A helical transmembrane segment spans residues 126–146; sequence WPLLFFIFFIIYLEFSAYVIT. The PNPLA domain maps to 301 to 493; that stretch reads LCLSGGASFG…REDIPLGSLH (193 aa). The GXSXG motif lies at 332 to 336; the sequence is GTSAG. Ser-334 serves as the catalytic Nucleophile. Asp-480 acts as the Proton acceptor in catalysis. Disordered stretches follow at residues 644 to 765, 778 to 806, and 818 to 929; these read ALSH…NFGD, LSSP…QRFR, and VSES…QDGA. Composition is skewed to polar residues over residues 652 to 664 and 745 to 764; these read NDPA…TNPE and PTHS…SNFG. Low complexity predominate over residues 779 to 806; the sequence is SSPFRSIRSNTSSSSNNVQSPSSSQRFR. Over residues 856–878 the composition is skewed to basic and acidic residues; it reads VESHSDRSEDEMLHSGANVKEEY.

This sequence belongs to the PLPL family.

It is found in the membrane. Probable lipid hydrolase. This is Patatin-like phospholipase domain-containing protein CNE02340 from Cryptococcus neoformans var. neoformans serotype D (strain JEC21 / ATCC MYA-565) (Filobasidiella neoformans).